We begin with the raw amino-acid sequence, 142 residues long: Hemoglobin subunit alpha (142 aa).

Positions 2–142 constitute a Globin domain; the sequence is VLSAADKGHV…VSTVLTSKYR (141 aa). Serine 4 carries the post-translational modification Phosphoserine. N6-succinyllysine occurs at positions 8 and 12. Lysine 17 bears the N6-acetyllysine; alternate mark. Residue lysine 17 is modified to N6-succinyllysine; alternate. Tyrosine 25 is subject to Phosphotyrosine. Serine 36 carries the phosphoserine modification. Residue lysine 41 is modified to N6-succinyllysine. Serine 50 bears the Phosphoserine mark. Histidine 59 is a binding site for O2. Histidine 88 provides a ligand contact to heme b. Serine 103 is modified (phosphoserine). Threonine 109 carries the phosphothreonine modification. Position 125 is a phosphoserine (serine 125). Threonine 135 and threonine 138 each carry phosphothreonine. Serine 139 bears the Phosphoserine mark.

This sequence belongs to the globin family. Heterotetramer of two alpha chains and two beta chains. Red blood cells.

Its function is as follows. Involved in oxygen transport from the lung to the various peripheral tissues. Hemopressin acts as an antagonist peptide of the cannabinoid receptor CNR1. Hemopressin-binding efficiently blocks cannabinoid receptor CNR1 and subsequent signaling. The sequence is that of Hemoglobin subunit alpha (HBA) from Notamacropus eugenii (Tammar wallaby).